We begin with the raw amino-acid sequence, 560 residues long: Dihydroxy-acid dehydratase (560 aa).

C52 contacts [2Fe-2S] cluster. D84 is a Mg(2+) binding site. [2Fe-2S] cluster is bound at residue C125. Mg(2+) contacts are provided by D126 and K127. K127 carries the post-translational modification N6-carboxylysine. [2Fe-2S] cluster is bound at residue C197. E448 contacts Mg(2+). Residue S474 is the Proton acceptor of the active site.

This sequence belongs to the IlvD/Edd family. Homodimer. The cofactor is [2Fe-2S] cluster. Mg(2+) is required as a cofactor.

The enzyme catalyses (2R)-2,3-dihydroxy-3-methylbutanoate = 3-methyl-2-oxobutanoate + H2O. The catalysed reaction is (2R,3R)-2,3-dihydroxy-3-methylpentanoate = (S)-3-methyl-2-oxopentanoate + H2O. The protein operates within amino-acid biosynthesis; L-isoleucine biosynthesis; L-isoleucine from 2-oxobutanoate: step 3/4. It participates in amino-acid biosynthesis; L-valine biosynthesis; L-valine from pyruvate: step 3/4. Functionally, functions in the biosynthesis of branched-chain amino acids. Catalyzes the dehydration of (2R,3R)-2,3-dihydroxy-3-methylpentanoate (2,3-dihydroxy-3-methylvalerate) into 2-oxo-3-methylpentanoate (2-oxo-3-methylvalerate) and of (2R)-2,3-dihydroxy-3-methylbutanoate (2,3-dihydroxyisovalerate) into 2-oxo-3-methylbutanoate (2-oxoisovalerate), the penultimate precursor to L-isoleucine and L-valine, respectively. The sequence is that of Dihydroxy-acid dehydratase from Francisella tularensis subsp. novicida (strain U112).